An 83-amino-acid polypeptide reads, in one-letter code: Exodeoxyribonuclease 7 small subunit (83 aa).

It belongs to the XseB family. As to quaternary structure, heterooligomer composed of large and small subunits.

It localises to the cytoplasm. It carries out the reaction Exonucleolytic cleavage in either 5'- to 3'- or 3'- to 5'-direction to yield nucleoside 5'-phosphates.. Functionally, bidirectionally degrades single-stranded DNA into large acid-insoluble oligonucleotides, which are then degraded further into small acid-soluble oligonucleotides. The polypeptide is Exodeoxyribonuclease 7 small subunit (Brucella melitensis biotype 1 (strain ATCC 23456 / CCUG 17765 / NCTC 10094 / 16M)).